A 301-amino-acid polypeptide reads, in one-letter code: Probable 2-dehydro-3-deoxy-D-pentonate aldolase YjhH (301 aa).

Catalysis depends on charge relay system residues threonine 46 and tyrosine 109. The active-site Proton donor is the tyrosine 135. Lysine 164 serves as the catalytic Schiff-base intermediate with substrate.

Belongs to the DapA family.

It is found in the cytoplasm. It carries out the reaction 2-dehydro-3-deoxy-D-arabinonate = glycolaldehyde + pyruvate. Its function is as follows. Functions as a 2-dehydro-3-deoxy-D-pentonate aldolase. This chain is Probable 2-dehydro-3-deoxy-D-pentonate aldolase YjhH (yjhH), found in Escherichia coli (strain K12).